Reading from the N-terminus, the 890-residue chain is Wolframin (890 aa).

Methionine 1 is modified (N-acetylmethionine). The segment at 1–86 (MDSNTAPLGP…TGPTKGDMEI (86 aa)) is disordered. Residues 1-321 (MDSNTAPLGP…MHWLSTIIPT (321 aa)) are interaction with ATP6V1A. A compositionally biased stretch (pro residues) spans 10–20 (PSCPQPPPAPQ). Threonine 30 is subject to Phosphothreonine; by FAM20C. Phosphoserine; by FAM20C is present on serine 32. Serine 157 bears the Phosphoserine mark. The next 10 membrane-spanning stretches (helical) occupy residues 314–334 (WLST…FIVS), 340–360 (FFAF…MVIC), 402–422 (LEPY…FPIA), 427–447 (IPCS…YLSL), 465–485 (AGLL…KVLG), 496–516 (LVVL…YLFF), 529–549 (CYLV…VILL), 563–583 (YFLF…VGVL), 589–609 (FTSL…VPLL), and 632–652 (MVKL…FYVY). The Lumenal portion of the chain corresponds to 653-869 (RSEGMKVYNS…HVKIEHDWRS (217 aa)). Asparagine 661 and asparagine 746 each carry an N-linked (GlcNAc...) asparagine glycan. Residues 870–890 (TVHGAVKFAFDFFFFPFLSAA) traverse the membrane as a helical segment.

As to quaternary structure, interacts with ATP6V1A. Highly expressed in heart followed by brain, placenta, lung and pancreas. Weakly expressed in liver, kidney and skeletal muscle. Also expressed in islet and beta-cell insulinoma cell line.

It localises to the endoplasmic reticulum membrane. It is found in the cytoplasmic vesicle. Its subcellular location is the secretory vesicle. Functionally, participates in the regulation of cellular Ca(2+) homeostasis, at least partly, by modulating the filling state of the endoplasmic reticulum Ca(2+) store. Negatively regulates the ER stress response and positively regulates the stability of V-ATPase subunits ATP6V1A and ATP1B1 by preventing their degradation through an unknown proteasome-independent mechanism. The chain is Wolframin (WFS1) from Homo sapiens (Human).